A 160-amino-acid chain; its full sequence is Protein cornichon homolog 2 (160 aa).

Over 1–10 (MAFTFAAFCY) the chain is Cytoplasmic. The chain crosses the membrane as a helical span at residues 11 to 31 (MLTLVLCAALIFFVIWQIIAF). The Lumenal segment spans residues 32–72 (DELRTDFKNPIDQSNPTRARERILNIERICNLLRRLVVPEY). The helical transmembrane segment at 73-93 (SIHGLFCLMFMCAGEWVTLGL) threads the bilayer. Residues 94–138 (NIPLLLYHLWRFFHRPADGSEVMYDPVSVMNADILNYCQKESWCK) lie on the Cytoplasmic side of the membrane. Residues 139-159 (LGFYLLSFFYYLYSMVYALVS) traverse the membrane as a helical segment. A topological domain (lumenal) is located at residue Phe160.

Belongs to the cornichon family.

Its subcellular location is the membrane. Functionally, regulates the trafficking and gating properties of AMPA-selective glutamate receptors (AMPARs). In Danio rerio (Zebrafish), this protein is Protein cornichon homolog 2 (cnih2).